We begin with the raw amino-acid sequence, 418 residues long: Calreticulin (418 aa).

Positions 1-17 (MLLPVPLLLGLLGLAAA) are cleaved as a signal peptide. Residues 18–197 (EPVVYFKEQF…NSQVESGSLE (180 aa)) are N-domain. A Ca(2+)-binding site is contributed by Q26. K48 carries the post-translational modification N6-acetyllysine. K62 and K64 together coordinate Ca(2+). At K64 the chain carries N6-(2-hydroxyisobutyryl)lysine. An intrachain disulfide couples C105 to C137. An alpha-D-glucoside is bound by residues Y109, K111, Y128, and D135. The residue at position 159 (K159) is an N6-acetyllysine. A 1-1 repeat occupies 191 to 202 (VESGSLEDDWDF). The tract at residues 191–255 (VESGSLEDDW…DAKKPEDWDE (65 aa)) is 4 X approximate repeats. The tract at residues 193 to 277 (SGSLEDDWDF…NPEYKGEWKP (85 aa)) is disordered. The segment at 198–308 (DDWDFLPPKK…YSPDANIYAY (111 aa)) is P-domain. A compositionally biased stretch (basic and acidic residues) spans 207–251 (KIKDPDASKPEDWDERAKIDDPTDSKPEDWDKPEHIPDPDAKKPE). K209 is subject to N6-acetyllysine. Repeat copies occupy residues 210 to 221 (DPDASKPEDWDE), 227 to 238 (DPTDSKPEDWDK), 244 to 255 (DPDAKKPEDWDE), 259 to 269 (GEWEPPVIQNP), 273 to 283 (GEWKPRQIDNP), and 287 to 297 (GTWIHPEIDNP). The segment at 237–270 (DKPEHIPDPDAKKPEDWDEEMDGEWEPPVIQNPE) is interaction with PPIB. Acidic residues predominate over residues 252-261 (DWDEEMDGEW). Positions 259 to 297 (GEWEPPVIQNPEYKGEWKPRQIDNPDYKGTWIHPEIDNP) are 3 X approximate repeats. The C-domain stretch occupies residues 309 to 418 (DSFAVLGLDL…AAAGQAKDEL (110 aa)). D317 lines the an alpha-D-glucoside pocket. D328 provides a ligand contact to Ca(2+). Residues 349–418 (VTKTAEKQMK…AAAGQAKDEL (70 aa)) are disordered. The segment covering 352–379 (TAEKQMKDKQDEEQRLKEEEEEKKRKEE) has biased composition (basic and acidic residues). The segment covering 380–409 (EEAEEDEEDKDDKEDEDEDEEDKDEEEEEA) has biased composition (acidic residues). Residues 415 to 418 (KDEL) carry the Prevents secretion from ER motif.

The protein belongs to the calreticulin family. Monomer. Component of an EIF2 complex at least composed of CELF1/CUGBP1, CALR, CALR3, EIF2S1, EIF2S2, HSP90B1 and HSPA5. Interacts with PDIA3/ERp57 and SPACA9. Interacts with TRIM21. Interacts with NR3C1. Interacts with PPIB. Interacts (via P-domain) with PDIA5. Interacts with CLCC1.

It localises to the endoplasmic reticulum lumen. Its subcellular location is the cytoplasm. It is found in the cytosol. The protein resides in the secreted. The protein localises to the extracellular space. It localises to the extracellular matrix. Its subcellular location is the cell surface. It is found in the sarcoplasmic reticulum lumen. The protein resides in the cytoplasmic vesicle. The protein localises to the secretory vesicle. It localises to the cortical granule. Its subcellular location is the cytolytic granule. Functionally, calcium-binding chaperone that promotes folding, oligomeric assembly and quality control in the endoplasmic reticulum (ER) via the calreticulin/calnexin cycle. This lectin interacts transiently with almost all of the monoglucosylated glycoproteins that are synthesized in the ER. Interacts with the DNA-binding domain of NR3C1 and mediates its nuclear export. Involved in maternal gene expression regulation. May participate in oocyte maturation via the regulation of calcium homeostasis. Present in the cortical granules of non-activated oocytes, is exocytosed during the cortical reaction in response to oocyte activation and might participate in the block to polyspermy. The sequence is that of Calreticulin (CALR) from Oryctolagus cuniculus (Rabbit).